The following is a 485-amino-acid chain: Protein disulfide isomerase-like 5-4 (485 aa).

The 150-residue stretch at 114–263 (VPTGSEFHPG…LVAAMETYVA (150 aa)) folds into the Thioredoxin domain. Catalysis depends on C170, which acts as the Nucleophile. A helical transmembrane segment spans residues 444 to 464 (FSHFITNVCAIIGGVFTVAGI).

The protein belongs to the protein disulfide isomerase family.

The protein localises to the membrane. Functionally, acts as a protein-folding catalyst that interacts with nascent polypeptides to catalyze the formation, isomerization, and reduction or oxidation of disulfide bonds. May play a role in storage protein biogenesis. The polypeptide is Protein disulfide isomerase-like 5-4 (PDIL5-4) (Oryza sativa subsp. japonica (Rice)).